We begin with the raw amino-acid sequence, 83 residues long: Protein WFDC9 (83 aa).

Residues 1-24 form the signal peptide; that stretch reads MKPWIIVLTVSAHGILVFLHVLGS.

The protein localises to the secreted. This chain is Protein WFDC9 (Wfdc9), found in Mus musculus (Mouse).